The following is a 337-amino-acid chain: Anthranilate phosphoribosyltransferase (337 aa).

Residues Gly82, 85–86 (GD), Thr90, 92–95 (NIST), 110–118 (KHGGRSVSS), and Ser122 contribute to the 5-phospho-alpha-D-ribose 1-diphosphate site. Gly82 contacts anthranilate. Ser94 contributes to the Mg(2+) binding site. Anthranilate is bound at residue Arg168. Residues Asp226 and Glu227 each coordinate Mg(2+).

Belongs to the anthranilate phosphoribosyltransferase family. As to quaternary structure, homodimer. It depends on Mg(2+) as a cofactor.

It catalyses the reaction N-(5-phospho-beta-D-ribosyl)anthranilate + diphosphate = 5-phospho-alpha-D-ribose 1-diphosphate + anthranilate. It functions in the pathway amino-acid biosynthesis; L-tryptophan biosynthesis; L-tryptophan from chorismate: step 2/5. Functionally, catalyzes the transfer of the phosphoribosyl group of 5-phosphorylribose-1-pyrophosphate (PRPP) to anthranilate to yield N-(5'-phosphoribosyl)-anthranilate (PRA). This chain is Anthranilate phosphoribosyltransferase, found in Francisella tularensis subsp. tularensis (strain WY96-3418).